The primary structure comprises 410 residues: MQFDSLPLPPSSSHDTTSVPPLKRHAACDECRKRKLKCSGEATGCSRCLKQSLPCHYSLQKPMGRPPKKRPREDNDASVYEITDNGMWADIDDGGILTEEAGAEATAASDALRLCPPVYTAPMRMPQAFPNLLSTDDSHNHLWQLESGRSLDPIPATTGPWPDFSSVTAATSSPFTLPSSLTLIDSPSVSSPSSDGGNSSQCTCLSYLYLCLSHLSSLAPFPISQHTLCSLFIAAKTARAVIRCEVCPTSFALGMQNVMFTGTLLNVIADAWLRVSQADAEELGKLAAPPAYVASVTQNSPNPAEAWKDWLRQTVRSAITGGPADPAGQVKCSDSPTLLSLIEEMEARQHRWHRTRTVESPNEPGSCSPVSHEDHREEDMLCFRVIRSARDVIAKFEFAPHEYPEGVVPV.

The segment at 1 to 24 is disordered; that stretch reads MQFDSLPLPPSSSHDTTSVPPLKR. The segment at residues 28–55 is a DNA-binding region (zn(2)-C6 fungal-type); sequence CDECRKRKLKCSGEATGCSRCLKQSLPC. The tract at residues 353–372 is disordered; the sequence is HRTRTVESPNEPGSCSPVSH. The span at 358–369 shows a compositional bias: polar residues; that stretch reads VESPNEPGSCSP.

Its subcellular location is the nucleus. In terms of biological role, transcription factor that is involved in protection against oxidative stress. Binds to promoter regions of the gliotoxin (GT) biosynthetic genes gliZ, gliF, gliT, gliM, gliA and gtmA. Two related but different DNA motifs (5'-TCGG-3' and 5'-CGGNCGG-3') are specifically enriched among rglT binding sites in GT-inducing conditions. Also indirectly regulates the expression of gliP, gliG, gliH and gliN. Plays a key role in resistance against exogenously-added GT and GT biosynthesis, mainly through the direct regulation of gliT. Furthermore, rglT is important for virulence in chemotherapeutic mice with invasive pulmonary aspergillosis (IPA). The polypeptide is Transcription factor rglT (Aspergillus fumigatus (strain CBS 144.89 / FGSC A1163 / CEA10) (Neosartorya fumigata)).